The sequence spans 353 residues: Fe(3+) ions import ATP-binding protein FbpC (353 aa).

Positions 9-239 (VVFENVRKTF…PASSFIADFM (231 aa)) constitute an ABC transporter domain. 41–48 (GPSGCGKT) contributes to the ATP binding site.

This sequence belongs to the ABC transporter superfamily. Fe(3+) ion importer (TC 3.A.1.10) family. In terms of assembly, the complex is composed of two ATP-binding proteins (FbpC), two transmembrane proteins (FbpB) and a solute-binding protein (FbpA).

It localises to the cell inner membrane. It catalyses the reaction Fe(3+)(out) + ATP + H2O = Fe(3+)(in) + ADP + phosphate + H(+). Part of the ABC transporter complex FbpABC involved in Fe(3+) ions import. Responsible for energy coupling to the transport system. The polypeptide is Fe(3+) ions import ATP-binding protein FbpC (Agrobacterium fabrum (strain C58 / ATCC 33970) (Agrobacterium tumefaciens (strain C58))).